We begin with the raw amino-acid sequence, 124 residues long: Protein RibT (124 aa).

In terms of domain architecture, N-acetyltransferase spans 3 to 124 (IRYKKSFEKI…QQDQDISYNN (122 aa)).

In terms of biological role, involved in riboflavin biosynthesis. The sequence is that of Protein RibT (ribT) from Bacillus subtilis (strain 168).